The sequence spans 680 residues: Chondroitin proteoglycan 4 (680 aa).

The N-terminal stretch at 1–18 (MLRVNLLILLCFVPFSLN) is a signal peptide. Asparagine 42, asparagine 59, asparagine 72, asparagine 167, asparagine 205, asparagine 458, asparagine 472, asparagine 486, asparagine 498, asparagine 526, asparagine 527, asparagine 556, and asparagine 604 each carry an N-linked (GlcNAc...) asparagine glycan. A disordered region spans residues 460–680 (TKKAETTKKS…PLTTTLHELY (221 aa)). Residues 484 to 500 (AANTTAETTKTTSANIT) show a composition bias toward low complexity. Positions 520 to 530 (SLDTSGNNSTV) are enriched in polar residues. 2 stretches are compositionally biased toward low complexity: residues 633–647 (GEASGEASGEASGEV) and 654–669 (SGYSGESPGENESSGE). Serine 640 and serine 644 each carry an O-linked (Xyl...) (chondroitin sulfate) serine glycan. N-linked (GlcNAc...) asparagine glycosylation occurs at asparagine 664.

This chain is Chondroitin proteoglycan 4 (cpg-4), found in Caenorhabditis briggsae.